The following is a 798-amino-acid chain: ATP-dependent RecD2 DNA helicase (798 aa).

370–374 lines the ATP pocket; it reads GTGKT.

It belongs to the RecD family. RecD2 subfamily. As to quaternary structure, interacts with SSB (sbbA).

The protein resides in the cytoplasm. It localises to the nucleoid. It catalyses the reaction Couples ATP hydrolysis with the unwinding of duplex DNA at the replication fork by translocating in the 5'-3' direction. This creates two antiparallel DNA single strands (ssDNA). The leading ssDNA polymer is the template for DNA polymerase III holoenzyme which synthesizes a continuous strand.. The enzyme catalyses ATP + H2O = ADP + phosphate + H(+). Its function is as follows. In vivo may favor replication restart by preventing RecA from binding to blocked replication forks, avoiding unnecessary recombination during replication restart. Acts as a negative modulator of the RecA-ssDNA filament, may dissasemble RecA threads, can act as both a positive and negative regulator of strand exchange. Probably stabilizes or aids normal replication fork progression, is important for survival after treatment with DNA-damaging agents that can result in replication fork stress. Overcomes the inhibition of replication restart by RecA/RecO, probably by displacing RecA. Increasing levels inhibit PriA-dependent DNA replication initiation (but have little effect on ongoing replication) in vitro; may act by disturbing SsbA assembly. Probably has a role in recombinational DNA repair. Does not seem to contribute to mismatch repair. Has 5'-3' helicase activity that is probably ATP-dependent. This chain is ATP-dependent RecD2 DNA helicase, found in Bacillus subtilis (strain 168).